The sequence spans 212 residues: Regulator of G-protein signaling 2 (212 aa).

Disordered regions lie at residues His11 to Met33 and Phe48 to Phe69. The necessary for membrane association stretch occupies residues Lys32–Pro66. Residues Leu79–Cys116 form a necessary to inhibit protein synthesis region. Residues Ala83–Cys199 form the RGS domain.

In terms of assembly, interacts with GNAQ. Does not interact with GNAI1 and GNAI3. Interacts with EIF2B5. Interacts with PRKG1 (isoform alpha). Post-translationally, phosphorylated by protein kinase C. Phosphorylation by PRKG1 leads to activation of RGS2 activity.

The protein localises to the cell membrane. Its subcellular location is the cytoplasm. The protein resides in the nucleus. It is found in the nucleolus. In terms of biological role, regulates G protein-coupled receptor signaling cascades. Inhibits signal transduction by increasing the GTPase activity of G protein alpha subunits, thereby driving them into their inactive GDP-bound form. It is involved in the negative regulation of the angiotensin-activated signaling pathway. Plays a role in the regulation of blood pressure in response to signaling via G protein-coupled receptors and GNAQ. Plays a role in regulating the constriction and relaxation of vascular smooth muscle. Binds EIF2B5 and blocks its activity, thereby inhibiting the translation of mRNA into protein. In Sus scrofa (Pig), this protein is Regulator of G-protein signaling 2 (RGS2).